The following is a 206-amino-acid chain: Small ribosomal subunit protein uS4 (206 aa).

The region spanning 96–158 (SRLDNVVYRM…AKKQLRIQNA (63 aa)) is the S4 RNA-binding domain.

Belongs to the universal ribosomal protein uS4 family. Part of the 30S ribosomal subunit. Contacts protein S5. The interaction surface between S4 and S5 is involved in control of translational fidelity.

Functionally, one of the primary rRNA binding proteins, it binds directly to 16S rRNA where it nucleates assembly of the body of the 30S subunit. With S5 and S12 plays an important role in translational accuracy. This is Small ribosomal subunit protein uS4 from Francisella tularensis subsp. holarctica (strain OSU18).